Here is a 258-residue protein sequence, read N- to C-terminus: Spindlin-3 (258 aa).

The segment at 1 to 23 (MKTPFGKAAAGQRSRTGAGHGSV) is disordered. 3 tudor-like domain regions span residues 50–99 (VGCR…LELH), 129–178 (VGKA…YQLL), and 210–255 (VGKQ…YDLV). Histone H3K4me3 and H3R8me2a binding regions lie at residues E138 and 246-248 (DFH).

Belongs to the SPIN/STSY family. As to quaternary structure, interacts with C11orf84/SPINDOC.

Its function is as follows. Exhibits H3K4me3-binding activity. This is Spindlin-3 (SPIN3) from Homo sapiens (Human).